The sequence spans 160 residues: Transcriptional repressor NrdR (160 aa).

Residues 1-11 (MRCPSCSSLDT) are compositionally biased toward polar residues. Residues 1–20 (MRCPSCSSLDTQVKDSRPTE) are disordered. A zinc finger spans residues 3-34 (CPSCSSLDTQVKDSRPTEDSSVIRRRRVCLAC). An ATP-cone domain is found at 49–139 (LTVIKRNGRR…VYRNFREAKD (91 aa)).

Belongs to the NrdR family. Zn(2+) is required as a cofactor.

Functionally, negatively regulates transcription of bacterial ribonucleotide reductase nrd genes and operons by binding to NrdR-boxes. The polypeptide is Transcriptional repressor NrdR (Rhodopseudomonas palustris (strain BisA53)).